A 431-amino-acid polypeptide reads, in one-letter code: Histidine--tRNA ligase (431 aa).

Belongs to the class-II aminoacyl-tRNA synthetase family. As to quaternary structure, homodimer.

It is found in the cytoplasm. The catalysed reaction is tRNA(His) + L-histidine + ATP = L-histidyl-tRNA(His) + AMP + diphosphate + H(+). This chain is Histidine--tRNA ligase, found in Neisseria gonorrhoeae (strain ATCC 700825 / FA 1090).